We begin with the raw amino-acid sequence, 107 residues long: Phosphoribosyl-ATP pyrophosphatase (107 aa).

It belongs to the PRA-PH family.

The protein localises to the cytoplasm. The enzyme catalyses 1-(5-phospho-beta-D-ribosyl)-ATP + H2O = 1-(5-phospho-beta-D-ribosyl)-5'-AMP + diphosphate + H(+). It participates in amino-acid biosynthesis; L-histidine biosynthesis; L-histidine from 5-phospho-alpha-D-ribose 1-diphosphate: step 2/9. The chain is Phosphoribosyl-ATP pyrophosphatase (hisE) from Rhizobium meliloti (strain 1021) (Ensifer meliloti).